Here is a 615-residue protein sequence, read N- to C-terminus: 1-deoxy-D-xylulose-5-phosphate synthase (615 aa).

Thiamine diphosphate is bound by residues His-72 and 111–113 (GHS). Position 142 (Asp-142) interacts with Mg(2+). Thiamine diphosphate contacts are provided by residues 143–144 (GA), Asn-171, Tyr-278, and Glu-360. Asn-171 is a binding site for Mg(2+).

It belongs to the transketolase family. DXPS subfamily. In terms of assembly, homodimer. Requires Mg(2+) as cofactor. The cofactor is thiamine diphosphate.

It carries out the reaction D-glyceraldehyde 3-phosphate + pyruvate + H(+) = 1-deoxy-D-xylulose 5-phosphate + CO2. Its pathway is metabolic intermediate biosynthesis; 1-deoxy-D-xylulose 5-phosphate biosynthesis; 1-deoxy-D-xylulose 5-phosphate from D-glyceraldehyde 3-phosphate and pyruvate: step 1/1. Its function is as follows. Catalyzes the acyloin condensation reaction between C atoms 2 and 3 of pyruvate and glyceraldehyde 3-phosphate to yield 1-deoxy-D-xylulose-5-phosphate (DXP). In Campylobacter jejuni subsp. doylei (strain ATCC BAA-1458 / RM4099 / 269.97), this protein is 1-deoxy-D-xylulose-5-phosphate synthase.